We begin with the raw amino-acid sequence, 276 residues long: Pantothenate synthetase (276 aa).

27-34 (MGALHRGH) contacts ATP. Catalysis depends on histidine 34, which acts as the Proton donor. Glutamine 58 provides a ligand contact to (R)-pantoate. Glutamine 58 provides a ligand contact to beta-alanine. 147–150 (GKKD) provides a ligand contact to ATP. Glutamine 153 serves as a coordination point for (R)-pantoate. Residues alanine 176 and 184–187 (LSSR) contribute to the ATP site.

The protein belongs to the pantothenate synthetase family. Homodimer.

Its subcellular location is the cytoplasm. It catalyses the reaction (R)-pantoate + beta-alanine + ATP = (R)-pantothenate + AMP + diphosphate + H(+). Its pathway is cofactor biosynthesis; (R)-pantothenate biosynthesis; (R)-pantothenate from (R)-pantoate and beta-alanine: step 1/1. Functionally, catalyzes the condensation of pantoate with beta-alanine in an ATP-dependent reaction via a pantoyl-adenylate intermediate. This is Pantothenate synthetase from Helicobacter pylori (strain P12).